A 1209-amino-acid polypeptide reads, in one-letter code: Calcium-activated potassium channel subunit alpha-1 (1209 aa).

Positions 1 to 23 are enriched in gly residues; the sequence is MANGGGGGGGSSGGGGGGGGGSG. A disordered region spans residues 1–61; the sequence is MANGGGGGGG…SSSSSSSSSV (61 aa). Over 1 to 86 the chain is Extracellular; the sequence is MANGGGGGGG…VPCDSRGQRM (86 aa). Polar residues predominate over residues 25–39; that stretch reads RMSSNIHANNLSLDA. Residues 40–60 show a composition bias toward low complexity; the sequence is SSSSSSSSSSSSSSSSSSSSS. Residues 87–107 traverse the membrane as a helical segment; it reads WWAFLASSMVTFFGGLFIILL. The Cytoplasmic segment spans residues 108–178; the sequence is WRTLKYLWTV…MISAQTLTGR (71 aa). 3 S-palmitoyl cysteine lipidation sites follow: Cys-118, Cys-119, and Cys-121. The helical transmembrane segment at 179–199 threads the bilayer; that stretch reads VLVVLVFALSIGALVIYFIDS. At 200-214 the chain is on the extracellular side; sequence SNPIESCQNFYKDFT. The helical transmembrane segment at 215-235 threads the bilayer; that stretch reads LQIDMAFNVFFLLYFGLRFIA. The Cytoplasmic segment spans residues 236-239; the sequence is ANDK. A helical membrane pass occupies residues 240 to 260; sequence LWFWLEVNSVVDFFTVPPVFV. At 261-264 the chain is on the extracellular side; the sequence is SVYL. A helical; Voltage-sensor membrane pass occupies residues 265 to 285; the sequence is NRSWLGLRFLRALRLIQFSEI. Residues 286-300 are Cytoplasmic-facing; that stretch reads LQFLNILKTSNSIKL. Residues 301–321 traverse the membrane as a helical segment; it reads VNLLSIFISTWLTAAGFIHLV. The Extracellular portion of the chain corresponds to 322-335; that stretch reads ENSGDPWENFQNNQ. An intramembrane region (pore-forming) is located at residues 336-358; the sequence is ALTYWECVYLLMVTMSTVGYGDV. The Selectivity for potassium signature appears at 352–355; that stretch reads TVGY. Topologically, residues 359 to 367 are extracellular; the sequence is YAKTTLGRL. Residues 368-388 traverse the membrane as a helical segment; it reads FMVFFILGGLAMFASYVPEII. Residues 389–1209 are Cytoplasmic-facing; it reads ELIGNRKKYG…KQNRKEMVYR (821 aa). Residues 407 to 549 enclose the RCK N-terminal 1 domain; the sequence is RKHIVVCGHI…WNWKEGDDAI (143 aa). Residues Glu-439, Gln-462, and Glu-464 each coordinate Mg(2+). Residues 556–576 form a segment S7 region; the sequence is LGFIAQSCLAQGLSTMLANLF. A segment S8 region spans residues 613–633; that stretch reads LSFPTVCELCFVKLKLLMIAI. At Asp-670 the chain carries Phosphothreonine. A Phosphoserine modification is found at Lys-672. Residues 681–685 form a heme-binding motif region; it reads CKACH. Residues 703 to 733 are disordered; the sequence is EDEQPPTLSPKKKQRNGGMRNSPNTSPKLMR. Residue Thr-709 is modified to Phosphothreonine. Ser-711, Ser-724, and Ser-728 each carry phosphoserine. The segment S9 stretch occupies residues 783–803; sequence VLSGHVVVCIFGDVSSALIGL. The 145-residue stretch at 785-929 folds into the RCK N-terminal 2 domain; the sequence is SGHVVVCIFG…MDRSSPDNSP (145 aa). Phosphothreonine is present on Thr-916. 2 positions are modified to phosphoserine: Ser-924 and Ser-928. Positions 976 to 998 match the Calcium bowl motif; that stretch reads TELVNDTNVQFLDQDDDDDPDTE. 4 residues coordinate Ca(2+): Gln-985, Asp-988, Asp-991, and Asp-993. The tract at residues 1005–1025 is segment S10; sequence FACGTAFAVSVLDSLMSATYF. The segment covering 1159-1184 has biased composition (low complexity); that stretch reads RASLSHSSHSSQSSSKKSSSVHSIPS. A disordered region spans residues 1159–1209; the sequence is RASLSHSSHSSQSSSKKSSSVHSIPSTANRPNRPKSRESRDKQNRKEMVYR. A compositionally biased stretch (basic and acidic residues) spans 1193–1209; the sequence is KSRESRDKQNRKEMVYR. A phosphoserine mark is found at Ser-1194 and Ser-1197.

It belongs to the potassium channel family. Calcium-activated (TC 1.A.1.3) subfamily. KCa1.1/KCNMA1 sub-subfamily. In terms of assembly, homotetramer; which constitutes the calcium-activated potassium channel. Interacts with beta subunits KCNMB1, KCNMB2, KCNMB3 and KCNMB4. Interacts with gamma subunits LRRC26, LRRC38, LRRC52 and LRRC55. Beta and gamma subunits are accessory, and modulate its activity. Interacts with RAB11B. Phosphorylated. Phosphorylation by kinases such as PKA and/or PKG. In smooth muscles, phosphorylation affects its activity. Post-translationally, palmitoylation by ZDHHC22 and ZDHHC23 within the intracellular linker between the S0 and S1 transmembrane domains regulates localization to the plasma membrane. Depalmitoylated by LYPLA1 and LYPLAL1, leading to retard exit from the trans-Golgi network.

It localises to the cell membrane. It carries out the reaction K(+)(in) = K(+)(out). With respect to regulation, ethanol and carbon monoxide-bound heme increase channel activation. Heme inhibits channel activation. Its function is as follows. Potassium channel activated by both membrane depolarization or increase in cytosolic Ca(2+) that mediates export of K(+). It is also activated by the concentration of cytosolic Mg(2+). Its activation dampens the excitatory events that elevate the cytosolic Ca(2+) concentration and/or depolarize the cell membrane. It therefore contributes to repolarization of the membrane potential. Plays a key role in controlling excitability in a number of systems, such as regulation of the contraction of smooth muscle, the tuning of hair cells in the cochlea, regulation of transmitter release, and innate immunity. In smooth muscles, its activation by high level of Ca(2+), caused by ryanodine receptors in the sarcoplasmic reticulum, regulates the membrane potential. In cochlea cells, its number and kinetic properties partly determine the characteristic frequency of each hair cell and thereby helps to establish a tonotopic map. Kinetics of KCNMA1 channels are determined by alternative splicing, phosphorylation status and its combination with modulating beta subunits. Highly sensitive to both iberiotoxin (IbTx) and charybdotoxin (CTX). In terms of biological role, potassium channel activated by both membrane depolarization or increase in cytosolic Ca(2+) that mediates export of K(+). This is Calcium-activated potassium channel subunit alpha-1 (Kcnma1) from Mus musculus (Mouse).